The following is a 694-amino-acid chain: Elongation factor G (694 aa).

Positions 9–288 (DAIRNIGIMA…VIVKWLPSPL (280 aa)) constitute a tr-type G domain. Residues 18-25 (AHIDAGKT), 82-86 (DTPGH), and 136-139 (NKMD) contribute to the GTP site.

Belongs to the TRAFAC class translation factor GTPase superfamily. Classic translation factor GTPase family. EF-G/EF-2 subfamily.

Its subcellular location is the cytoplasm. Functionally, catalyzes the GTP-dependent ribosomal translocation step during translation elongation. During this step, the ribosome changes from the pre-translocational (PRE) to the post-translocational (POST) state as the newly formed A-site-bound peptidyl-tRNA and P-site-bound deacylated tRNA move to the P and E sites, respectively. Catalyzes the coordinated movement of the two tRNA molecules, the mRNA and conformational changes in the ribosome. The polypeptide is Elongation factor G (Chlamydia trachomatis serovar L2 (strain ATCC VR-902B / DSM 19102 / 434/Bu)).